A 366-amino-acid chain; its full sequence is Anhydro-N-acetylmuramic acid kinase (366 aa).

Residue 10–17 (GTSMDGID) participates in ATP binding.

The protein belongs to the anhydro-N-acetylmuramic acid kinase family.

The catalysed reaction is 1,6-anhydro-N-acetyl-beta-muramate + ATP + H2O = N-acetyl-D-muramate 6-phosphate + ADP + H(+). Its pathway is amino-sugar metabolism; 1,6-anhydro-N-acetylmuramate degradation. The protein operates within cell wall biogenesis; peptidoglycan recycling. Its function is as follows. Catalyzes the specific phosphorylation of 1,6-anhydro-N-acetylmuramic acid (anhMurNAc) with the simultaneous cleavage of the 1,6-anhydro ring, generating MurNAc-6-P. Is required for the utilization of anhMurNAc either imported from the medium or derived from its own cell wall murein, and thus plays a role in cell wall recycling. The chain is Anhydro-N-acetylmuramic acid kinase from Legionella pneumophila subsp. pneumophila (strain Philadelphia 1 / ATCC 33152 / DSM 7513).